Here is a 241-residue protein sequence, read N- to C-terminus: Triosephosphate isomerase (241 aa).

Position 9 to 11 (9 to 11) interacts with substrate; sequence NWK. His96 serves as the catalytic Electrophile. Glu165 acts as the Proton acceptor in catalysis. Substrate contacts are provided by residues Gly171, Ser204, and 225-226; that span reads GG.

This sequence belongs to the triosephosphate isomerase family. In terms of assembly, homodimer.

Its subcellular location is the cytoplasm. It catalyses the reaction D-glyceraldehyde 3-phosphate = dihydroxyacetone phosphate. Its pathway is carbohydrate biosynthesis; gluconeogenesis. It functions in the pathway carbohydrate degradation; glycolysis; D-glyceraldehyde 3-phosphate from glycerone phosphate: step 1/1. In terms of biological role, involved in the gluconeogenesis. Catalyzes stereospecifically the conversion of dihydroxyacetone phosphate (DHAP) to D-glyceraldehyde-3-phosphate (G3P). This is Triosephosphate isomerase from Prochlorococcus marinus (strain MIT 9312).